The primary structure comprises 445 residues: Trigger factor (445 aa).

Residues glycine 172–proline 257 form the PPIase FKBP-type domain.

The protein belongs to the FKBP-type PPIase family. Tig subfamily.

It is found in the cytoplasm. The enzyme catalyses [protein]-peptidylproline (omega=180) = [protein]-peptidylproline (omega=0). Its function is as follows. Involved in protein export. Acts as a chaperone by maintaining the newly synthesized protein in an open conformation. Functions as a peptidyl-prolyl cis-trans isomerase. This Polynucleobacter asymbioticus (strain DSM 18221 / CIP 109841 / QLW-P1DMWA-1) (Polynucleobacter necessarius subsp. asymbioticus) protein is Trigger factor.